The sequence spans 61 residues: Small ribosomal subunit protein uS14 (61 aa).

4 residues coordinate Zn(2+): Cys-24, Cys-27, Cys-40, and Cys-43.

The protein belongs to the universal ribosomal protein uS14 family. Zinc-binding uS14 subfamily. As to quaternary structure, part of the 30S ribosomal subunit. Contacts proteins S3 and S10. Requires Zn(2+) as cofactor.

In terms of biological role, binds 16S rRNA, required for the assembly of 30S particles and may also be responsible for determining the conformation of the 16S rRNA at the A site. The chain is Small ribosomal subunit protein uS14 from Campylobacter concisus (strain 13826).